The primary structure comprises 405 residues: Multi-drug resistance efflux pump PmrA homolog (405 aa).

A run of 12 helical transmembrane segments spans residues 13 to 33 (LFIT…VMPF), 50 to 70 (LYSG…APIW), 88 to 108 (IVMT…WLLG), 111 to 131 (LLMG…ASQA), 147 to 167 (MVSG…WFGM), 170 to 190 (VFLI…FFVH), 216 to 236 (ILFG…SIEP), 254 to 274 (FISG…SSFL), 286 to 306 (LILI…FVQS), 308 to 328 (LQLG…TPSV), 350 to 370 (MCSN…AGYI), and 374 to 394 (AAIV…FINF).

It belongs to the major facilitator superfamily. TCR/Tet family.

Its subcellular location is the cell membrane. Functionally, efflux pump for various substrates. The sequence is that of Multi-drug resistance efflux pump PmrA homolog (pmrA) from Lactococcus lactis subsp. lactis (strain IL1403) (Streptococcus lactis).